A 295-amino-acid chain; its full sequence is Large ribosomal subunit protein uL15m (295 aa).

A mitochondrion-targeting transit peptide spans 1-20 (MAGTARGCGTSLDLLRSLPR). The tract at residues 21–67 (VSLANLKPSPNSRKRERRPRDRRRGRKCGRGHKGERQRGTRPRLGFE) is disordered. Basic residues predominate over residues 32–51 (SRKRERRPRDRRRGRKCGRG).

This sequence belongs to the universal ribosomal protein uL15 family. As to quaternary structure, component of the mitochondrial ribosome large subunit (39S) which comprises a 16S rRNA and about 50 distinct proteins.

It localises to the mitochondrion. The chain is Large ribosomal subunit protein uL15m (Mrpl15) from Mus musculus (Mouse).